A 139-amino-acid chain; its full sequence is Cytochrome c-551 (139 aa).

An N-terminal signal peptide occupies residues 1–20 (MTRTLAVVLAMTFSAAPVFA). Heme c-binding residues include C34, C37, H38, and M116.

It belongs to the cytochrome c family. In terms of processing, binds 1 heme c group covalently per subunit.

The polypeptide is Cytochrome c-551 (Roseobacter denitrificans (strain ATCC 33942 / OCh 114) (Erythrobacter sp. (strain OCh 114))).